A 232-amino-acid polypeptide reads, in one-letter code: Peptidyl-prolyl cis-trans isomerase FKBP18, chloroplastic (232 aa).

The region spanning 108-226 (GSTAQVHFDC…ELNIELLRVT (119 aa)) is the PPIase FKBP-type domain.

This sequence belongs to the FKBP-type PPIase family.

It localises to the plastid. Its subcellular location is the chloroplast thylakoid lumen. The catalysed reaction is [protein]-peptidylproline (omega=180) = [protein]-peptidylproline (omega=0). Functionally, PPIases accelerate the folding of proteins. It catalyzes the cis-trans isomerization of proline imidic peptide bonds in oligopeptides. In Arabidopsis thaliana (Mouse-ear cress), this protein is Peptidyl-prolyl cis-trans isomerase FKBP18, chloroplastic (FKBP18).